Here is a 365-residue protein sequence, read N- to C-terminus: Casein kinase I homolog hhp1 (365 aa).

One can recognise a Protein kinase domain in the interval 11–279 (YRIGRKIGSG…YLRKLFRDLF (269 aa)). Residues 17–25 (IGSGSFGDI) and K40 contribute to the ATP site. The Proton acceptor role is filled by D130. Over residues 301-311 (DQQHQQQLQQQ) the composition is skewed to low complexity. Positions 301–365 (DQQHQQQLQQ…TGAQYINRPN (65 aa)) are disordered. The segment covering 343 to 365 (INTTVPVINDPSATGAQYINRPN) has biased composition (polar residues).

Belongs to the protein kinase superfamily. CK1 Ser/Thr protein kinase family. Casein kinase I subfamily.

It is found in the nucleus. It catalyses the reaction L-seryl-[protein] + ATP = O-phospho-L-seryl-[protein] + ADP + H(+). The enzyme catalyses L-threonyl-[protein] + ATP = O-phospho-L-threonyl-[protein] + ADP + H(+). Involved in DNA repair. Has a probable role in repairing alkylated DNA and may regulate the activity of protein(s) involved in double strand break repair caused by gamma rays. In Schizosaccharomyces pombe (strain 972 / ATCC 24843) (Fission yeast), this protein is Casein kinase I homolog hhp1 (hhp1).